The following is a 239-amino-acid chain: MRPSQRRPDQLRAVMITRNFTCHAEGSVLVEFGATRVLCTASVEDTVPPFLRGRGQGWLTAEYGMLPRATHTRSAREAAKGKQSGRTQEIQRLIGRSLRAVVDLSALGERQIVIDCDVLQADGGTRTAAITGACVAVHDAFRKLVTEGKLPYSPLREFVAAVSVGMFQGVPVLDLDYAEDSGCDTDMNVVMTGAGGFVEVQGTAEGATFSRAELNALLELAESGIRRLVEAQKAAIDRN.

Phosphate contacts are provided by residues Arg-86 and 124 to 126; that span reads GTR.

Belongs to the RNase PH family. In terms of assembly, homohexameric ring arranged as a trimer of dimers.

The catalysed reaction is tRNA(n+1) + phosphate = tRNA(n) + a ribonucleoside 5'-diphosphate. Functionally, phosphorolytic 3'-5' exoribonuclease that plays an important role in tRNA 3'-end maturation. Removes nucleotide residues following the 3'-CCA terminus of tRNAs; can also add nucleotides to the ends of RNA molecules by using nucleoside diphosphates as substrates, but this may not be physiologically important. Probably plays a role in initiation of 16S rRNA degradation (leading to ribosome degradation) during starvation. The polypeptide is Ribonuclease PH (Aromatoleum aromaticum (strain DSM 19018 / LMG 30748 / EbN1) (Azoarcus sp. (strain EbN1))).